Consider the following 85-residue polypeptide: Large ribosomal subunit protein eL43 (85 aa).

The C4-type zinc-finger motif lies at 38–59 (CPVCGRKAVRRISTGIWQCQKC).

The protein belongs to the eukaryotic ribosomal protein eL43 family. Zn(2+) is required as a cofactor.

This is Large ribosomal subunit protein eL43 from Thermococcus sibiricus (strain DSM 12597 / MM 739).